Reading from the N-terminus, the 483-residue chain is NADH-quinone oxidoreductase subunit N (483 aa).

Transmembrane regions (helical) follow at residues 13–33 (ALPE…DAAV), 39–57 (YLAY…FLTV), 76–96 (PLSD…LVYS), 110–130 (FFVL…ASHF), 131–151 (LTLY…VALQ), 165–185 (FVLG…VYGV), 206–226 (IPLV…LGAV), 240–260 (PTAM…AFVV), 277–297 (MLVI…IAQS), 302–322 (MFAY…LAGS), 330–350 (MFYV…ILLL), 373–393 (LAFV…TVGF), 406–426 (IGYV…AFYY), and 459–479 (LAVL…VQAI).

Belongs to the complex I subunit 2 family. NDH-1 is composed of 14 different subunits. Subunits NuoA, H, J, K, L, M, N constitute the membrane sector of the complex.

The protein resides in the cell inner membrane. The enzyme catalyses a quinone + NADH + 5 H(+)(in) = a quinol + NAD(+) + 4 H(+)(out). Its function is as follows. NDH-1 shuttles electrons from NADH, via FMN and iron-sulfur (Fe-S) centers, to quinones in the respiratory chain. The immediate electron acceptor for the enzyme in this species is believed to be ubiquinone. Couples the redox reaction to proton translocation (for every two electrons transferred, four hydrogen ions are translocated across the cytoplasmic membrane), and thus conserves the redox energy in a proton gradient. This chain is NADH-quinone oxidoreductase subunit N, found in Thiobacillus denitrificans (strain ATCC 25259 / T1).